Reading from the N-terminus, the 184-residue chain is MKLCRCPICHSDIHLEALIEDDAGRELLGKISQLTHGCAQPMVGYLGLFKPAKSNLNNARALKILSEVLDLYPCSLLLAQALSETVASLRKKRQQALQTGQKIEPLTNHNYLKSVYETQKPHFAVIRSGKNQSETVKAQQAEDKKVQDAILYVERFVQLGQEEFVKNSPEYQIWLNHKAQKQAL.

This is an uncharacterized protein from Haemophilus influenzae (strain ATCC 51907 / DSM 11121 / KW20 / Rd).